The chain runs to 1561 residues: Formin-E (1561 aa).

Over residues 1–28 (MDNHSSSSNPSSLSSSSSSSSSSSSFLS) the composition is skewed to low complexity. Disordered stretches follow at residues 1 to 63 (MDNH…EEKP), 77 to 187 (EEEE…GKLS), 211 to 279 (PIIV…SSED), and 305 to 365 (ILRS…NLNY). Positions 29–51 (DHVKKEEQNGLDTIKEEIENKIE) are enriched in basic and acidic residues. The stretch at 32 to 85 (KKEEQNGLDTIKEEIENKIENEEEEEKIEEKPIEKVEEEKIIVQKEEEEKIEEE) forms a coiled coil. Residues 80-89 (EKIEEEPIEK) are compositionally biased toward acidic residues. Positions 103–120 (DNINTTVEAKTLETSTEP) are enriched in polar residues. Residues 158-208 (EQQEQQEKQKEETKPSIREEVKEKIKGKLSEIKEEIKDIKEEIKHVIREEV) are a coiled coil. Positions 162-187 (QQEKQKEETKPSIREEVKEKIKGKLS) are enriched in basic and acidic residues. Residues 220 to 229 (SPPPPPPPPS) are compositionally biased toward pro residues. The span at 230 to 258 (ITVQSSSPVSSQISSPVSSPVSSPKPSVT) shows a compositional bias: low complexity. Positions 305-320 (ILRSKSSPNPGANNPN) are enriched in polar residues. Residues 326 to 365 (NNSSSSSSSNNNSDNNNNSDNNSNNNNINNNNSSSNNLNY) are compositionally biased toward low complexity. The Phorbol-ester/DAG-type zinc-finger motif lies at 379-427 (YHDFKIHRGTSSCVYCGENTRLWSTSYKCFFCGVVCHKKCLDSMNTIPC). The segment covering 465-534 (PSSITNSSSK…TSISSPPIAS (70 aa)) has biased composition (low complexity). Residues 465–549 (PSSITNSSSK…PLLQQQQQQQ (85 aa)) form a disordered region. Residues 541–573 (LLQQQQQQQQQQQQQQQQQQQQQQQQQQISTTQ) are a coiled coil. The GBD/FH3 domain maps to 581 to 929 (SEKPDDDMIN…QISLHKGGFE (349 aa)). A coiled-coil region spans residues 952–989 (LNRKLGELEKQNIDKAMKIQEQDINIKSLLDLLKQLKD). Disordered regions lie at residues 1009–1092 (MEPP…VPKP), 1466–1508 (EEKR…SDED), and 1526–1561 (RQAKGRRRTTHQIATSKMISNNLDPSKILPTSPNKN). Low complexity predominate over residues 1017 to 1033 (SVKSPDDPNNAAPIVVA). The 63-residue stretch at 1019 to 1081 (KSPDDPNNAA…LGAKKPPAGV (63 aa)) folds into the FH1 domain. Residues 1034–1070 (PIPPPPPPISGAPPPPPPPPPPMKGGAGPPPPPPPPG) show a composition bias toward pro residues. A compositionally biased stretch (low complexity) spans 1071–1081 (KLGAKKPPAGV). Residues 1086–1475 (PPKVPKPSHP…EEKRLQQKQQ (390 aa)) form the FH2 domain. The stretch at 1398–1491 (LATASTEVEK…RKLTTSNESA (94 aa)) forms a coiled coil. Positions 1466 to 1481 (EEKRLQQKQQRQERAV) are enriched in basic and acidic residues. Composition is skewed to polar residues over residues 1484-1498 (LTTSNESASASPNHA) and 1536-1561 (HQIATSKMISNNLDPSKILPTSPNKN). Residues 1488–1518 (NESASASPNHAKSTDDKSDEDDDIVNDLLMA) form the DAD domain.

The protein belongs to the formin homology family. Diaphanous subfamily. Interacts (via GBD/FH3 domain) with activated Rho-GTPases.

Its function is as follows. Formins play an important role in the nucleation of actin and the formation of linear actin filaments. The polypeptide is Formin-E (forE) (Dictyostelium discoideum (Social amoeba)).